Here is a 260-residue protein sequence, read N- to C-terminus: Uroplakin-1b (260 aa).

Over M1 to L15 the chain is Cytoplasmic. Residues I16–F36 traverse the membrane as a helical segment. The Extracellular portion of the chain corresponds to V37–W60. A helical transmembrane segment spans residues I61–M81. Topologically, residues K82–K86 are cytoplasmic. Residues I87–I107 form a helical membrane-spanning segment. Over T108–H229 the chain is Extracellular. The helical transmembrane segment at A230–G250 threads the bilayer. At T251–Y260 the chain is on the cytoplasmic side.

This sequence belongs to the tetraspanin (TM4SF) family. As to quaternary structure, heterodimer with uroplakin-3A (UPK3A) or uroplakin-3B (UPK3B). In terms of processing, N-glycosylated with high-mannose oligosaccharides. In terms of tissue distribution, bladder epithelium.

It is found in the membrane. Its function is as follows. Component of the asymmetric unit membrane (AUM); a highly specialized biomembrane elaborated by terminally differentiated urothelial cells. May play an important role in normal bladder epithelial physiology, possibly in regulating membrane permeability of superficial umbrella cells or in stabilizing the apical membrane through AUM/cytoskeletal interactions. This Homo sapiens (Human) protein is Uroplakin-1b (UPK1B).